An 886-amino-acid chain; its full sequence is DNA repair and recombination protein RAD54B (886 aa).

Polar residues predominate over residues 1-12; the sequence is MRRSAAPSQVQG. Residues 1-95 are disordered; that stretch reads MRRSAAPSQV…ASKEITESKA (95 aa). S14 bears the Phosphoserine mark. Polar residues predominate over residues 47-62; the sequence is AEQSQNDPGVCSSNPC. Basic and acidic residues-rich tracts occupy residues 67 to 76 and 86 to 95; these read IPREVGDGTR and ASKEITESKA. In terms of domain architecture, Helicase ATP-binding spans 291 to 458; sequence GMRAVGKCGA…FALVDFVNPG (168 aa). 304 to 311 lines the ATP pocket; it reads DEMGLGKT. The DEGH box motif lies at 409–412; that stretch reads DEGH. The region spanning 627–788 is the Helicase C-terminal domain; that stretch reads KLLAVIHELR…HIQFSVEELK (162 aa).

The protein belongs to the SNF2/RAD54 helicase family. Interacts with RAD51 through the NH2-terminal domain.

It is found in the nucleus. Its function is as follows. Involved in DNA repair and mitotic recombination. May play an active role in recombination processes in concert with other members of the RAD52 epistasis group. This chain is DNA repair and recombination protein RAD54B (Rad54b), found in Mus musculus (Mouse).